The following is a 185-amino-acid chain: CD160 antigen (185 aa).

The first 27 residues, 1-27 (MQRILMAPGQSCCALAILLAIVNFQHG), serve as a signal peptide directing secretion. In terms of domain architecture, Ig-like V-type spans 28 to 136 (GCIHVTSSAS…HGHFLSVLVT (109 aa)). Cystine bridges form between Cys47–Cys115 and Cys64–Cys71. N-linked (GlcNAc...) asparagine glycosylation is found at Asn138 and Asn156. Ser160 carries the GPI-anchor amidated serine lipid modification. Residues 161–185 (SGFLQVKAWGMLVTSLVALQALYTL) constitute a propeptide, removed in mature form.

As to quaternary structure, homomultimer; disulfide-linked. Interacts with classical and non-classical MHC class I molecules. Interacts with TNFRSF14 (via cysteine-rich domain 1); this interaction is direct. Interacts with LCK and CD247/CD3 zeta chain. As to expression, expressed in resting and activated NK cell subsets (at protein level). Expressed in resting NKT cells (at protein level). Expressed in activated CD8+ T cells (at protein level). Highly expressed in intraepithelial lymphocyte (IEL) subsets, particularly in innate-like CD8A-positive IELs (at protein level).

The protein resides in the cell membrane. Its subcellular location is the secreted. Its function is as follows. Receptor on immune cells capable to deliver stimulatory or inhibitory signals that regulate cell activation and differentiation. Exists as a GPI-anchored and as a transmembrane form, each likely initiating distinct signaling pathways via phosphoinositol 3-kinase in activated NK cells and via LCK and CD247/CD3 zeta chain in activated T cells. Receptor for both classical and non-classical MHC class I molecules. Receptor or ligand for TNF superfamily member TNFRSF14, participating in bidirectional cell-cell contact signaling between antigen presenting cells and lymphocytes. Upon ligation of TNFRSF14, provides stimulatory signal to NK cells enhancing IFNG production and anti-tumor immune response. On activated CD4+ T cells, interacts with TNFRSF14 and down-regulates CD28 costimulatory signaling, restricting memory and alloantigen-specific immune response. In the context of bacterial infection, acts as a ligand for TNFRSF14 on epithelial cells, triggering the production of antimicrobial proteins and pro-inflammatory cytokines. In terms of biological role, the soluble GPI-cleaved form, usually released by activated lymphocytes, might play an immune regulatory role by limiting lymphocyte effector functions. In Mus musculus (Mouse), this protein is CD160 antigen.